The chain runs to 324 residues: Zinc metalloproteinase leucurolysin-B (324 aa).

The region spanning 1-119 is the Peptidase M12B domain; the sequence is DTVLLNRISH…LNPQCILNEP (119 aa). Residue Asp-11 participates in Ca(2+) binding. Cystine bridges form between Cys-34-Cys-114, Cys-74-Cys-98, and Cys-76-Cys-81. His-59 is a binding site for Zn(2+). Glu-60 is a catalytic residue. Zn(2+)-binding residues include His-63 and His-69. Asn-97 carries N-linked (GlcNAc...) asparagine glycosylation. Residues Cys-114, Asn-117, Val-129, Asn-132, Leu-134, Glu-136, Glu-139, and Asp-142 each contribute to the Ca(2+) site. The Disintegrin domain maps to 127 to 213; the sequence is PPVCGNELLE…QCPTDDFKRN (87 aa). Cystine bridges form between Cys-130–Cys-159, Cys-141–Cys-154, Cys-143–Cys-149, Cys-153–Cys-176, Cys-167–Cys-173, Cys-172–Cys-198, Cys-185–Cys-205, Cys-192–Cys-224, Cys-217–Cys-229, Cys-236–Cys-286, Cys-251–Cys-295, Cys-264–Cys-274, and Cys-281–Cys-315. A D/ECD-tripeptide motif is present at residues 191–193; sequence ECD. N-linked (GlcNAc...) asparagine glycosylation is found at Asn-296 and Asn-305.

Belongs to the venom metalloproteinase (M12B) family. P-III subfamily. P-IIIa sub-subfamily. Monomer. The cofactor is Zn(2+). In terms of processing, N-glycosylated. Post-translationally, the N-terminus is blocked. In terms of tissue distribution, expressed by the venom gland.

The protein resides in the secreted. Its activity is regulated as follows. Inhibited by EDTA, but not by PMSF. Pre-incubation with 2 mM DTT completely abolishes activity. Its function is as follows. Snake venom zinc metalloproteinase that acts as a potent hemorrhagic toxin. Hydrolyzes the insulin B chain at the 14-Ala-|-Leu-15 bond but not the 16-Tyr-|-Leu-17 bond. Degrades the alpha-chain of fibrin and hydrolyzes the Aalpha-chain of fibrinogen (FGA) while leaving the beta and gamma chains unaffected. Degrades type-I collagen and its gelatin. Degrades the alpha-1 chain of type-IV collagen and its gelatin but not the alpha-2 chain. Degrades plasma fibronectin, plasma vitronectin and basement membrane enactin. It inhibits collagen-induced platelet aggregation. The chain is Zinc metalloproteinase leucurolysin-B from Bothrops leucurus (Whitetail lancehead).